Here is a 446-residue protein sequence, read N- to C-terminus: Forkhead box protein F2 (446 aa).

Over residues 1-18 the composition is skewed to pro residues; the sequence is MSTEGGPPPPPPRPPPAP. The tract at residues 1 to 97 is disordered; that stretch reads MSTEGGPPPP…TKKATSGLRR (97 aa). Low complexity predominate over residues 45–78; it reads STSSSSSSSSASCASSSSNSVSASAGACKSAASS. Positions 100–194 form a DNA-binding region, fork-head; the sequence is KPPYSYIALI…EEGSFRRRPR (95 aa). 3 disordered regions span residues 257-278, 304-325, and 340-371; these read AGAP…HMSP, GGGG…SPAM, and AHWS…GLHP. The segment covering 263–274 has biased composition (basic residues); it reads AHPHHLHHHHVP. Residues 311–325 are compositionally biased toward low complexity; that stretch reads GPDSSSSPVPSSPAM.

As to quaternary structure, interacts with the transcription factors TBP and TFIIB. Uniquely expressed in the bronchiolar epithelium and in type II pneumocytes.

Its subcellular location is the nucleus. Its function is as follows. Probable transcription activator for a number of lung-specific genes. Mediates up-regulation of the E3 ligase IRF2BPL and drives ubiquitination and degradation of CTNNB1. This Mus musculus (Mouse) protein is Forkhead box protein F2 (Foxf2).